The following is a 397-amino-acid chain: Purine ribonucleoside efflux pump NepI (397 aa).

The Cytoplasmic segment spans residues 1 to 21; it reads MNENIAEKFRADGVARPNWSA. Residues 22-42 traverse the membrane as a helical segment; it reads VFAVAFCVACLITVEFLPVSL. Topologically, residues 43-54 are periplasmic; it reads LTPMAQDLGISE. The chain crosses the membrane as a helical span at residues 55–75; that stretch reads GIAGQSVTVTAFVAMFSSLFI. At 76–85 the chain is on the cytoplasmic side; it reads TQIIQATDRR. Residues 86–106 traverse the membrane as a helical segment; sequence YIVILFAVLLTASCLMVSFAN. Position 107 (Ser-107) is a topological domain, periplasmic. The chain crosses the membrane as a helical span at residues 108 to 128; the sequence is FTLLLLGRACLGLALGGFWAM. Residues 129 to 147 lie on the Cytoplasmic side of the membrane; that stretch reads SASLTMRLVPARTVPKALS. A helical transmembrane segment spans residues 148-168; it reads VIFGAVSIALVIAAPLGSFLG. Residues 169–175 lie on the Periplasmic side of the membrane; the sequence is GIIGWRN. Residues 176–196 traverse the membrane as a helical segment; the sequence is VFNAAAVMGVLCVIWVVKSLP. At 197–215 the chain is on the cytoplasmic side; that stretch reads SLPGEPSHQKQNMFSLLQR. A helical membrane pass occupies residues 216 to 236; it reads PGVMAGMIAIFMSFAGQFAFF. Residues 237 to 255 are Periplasmic-facing; it reads TYIRPVYMNLAGFDVDGLT. A helical transmembrane segment spans residues 256-276; it reads LVLLSFGIASFVGTSFSSYVL. At 277–281 the chain is on the cytoplasmic side; the sequence is KRSVK. The chain crosses the membrane as a helical span at residues 282-302; the sequence is LALAGAPLLLALSALTLIVWG. The Periplasmic portion of the chain corresponds to 303–305; it reads SDK. A helical transmembrane segment spans residues 306 to 326; it reads TVAAVIAIIWGLAFALVPVGW. The Cytoplasmic portion of the chain corresponds to 327–343; it reads STWITRSLADQAEKAGS. A helical transmembrane segment spans residues 344 to 364; it reads IQVAVIQLANTCGAAVGGYAL. The Periplasmic segment spans residues 365–366; it reads DN. Residues 367–387 traverse the membrane as a helical segment; it reads FGLLSPLALSGCLMLLTALVV. The Cytoplasmic segment spans residues 388–397; it reads AAKVRITPMS.

The protein belongs to the major facilitator superfamily. DHA1 family. NepI (TC 2.A.1.2.26) subfamily.

The protein localises to the cell inner membrane. The enzyme catalyses inosine(in) + H(+)(out) = inosine(out) + H(+)(in). It carries out the reaction guanosine(in) + H(+)(out) = guanosine(out) + H(+)(in). Its function is as follows. Involved in the efflux of purine ribonucleosides, such as inosine and guanosine. The protein is Purine ribonucleoside efflux pump NepI of Salmonella enteritidis PT4 (strain P125109).